The following is a 299-amino-acid chain: 4-diphosphocytidyl-2-C-methyl-D-erythritol kinase (299 aa).

The active site involves K17. Residue 103–113 (PVASGIGGGSG) coordinates ATP. D145 is an active-site residue.

The protein belongs to the GHMP kinase family. IspE subfamily.

The catalysed reaction is 4-CDP-2-C-methyl-D-erythritol + ATP = 4-CDP-2-C-methyl-D-erythritol 2-phosphate + ADP + H(+). The protein operates within isoprenoid biosynthesis; isopentenyl diphosphate biosynthesis via DXP pathway; isopentenyl diphosphate from 1-deoxy-D-xylulose 5-phosphate: step 3/6. Catalyzes the phosphorylation of the position 2 hydroxy group of 4-diphosphocytidyl-2C-methyl-D-erythritol. The sequence is that of 4-diphosphocytidyl-2-C-methyl-D-erythritol kinase from Bartonella tribocorum (strain CIP 105476 / IBS 506).